Here is a 355-residue protein sequence, read N- to C-terminus: UDP-N-acetylglucosamine--N-acetylmuramyl-(pentapeptide) pyrophosphoryl-undecaprenol N-acetylglucosamine transferase (355 aa).

UDP-N-acetyl-alpha-D-glucosamine is bound by residues 15 to 17 (TGG), Asn127, Arg163, Ser191, Ile244, 263 to 268 (ALTVSE), and Gln288.

Belongs to the glycosyltransferase 28 family. MurG subfamily.

It is found in the cell inner membrane. It carries out the reaction di-trans,octa-cis-undecaprenyl diphospho-N-acetyl-alpha-D-muramoyl-L-alanyl-D-glutamyl-meso-2,6-diaminopimeloyl-D-alanyl-D-alanine + UDP-N-acetyl-alpha-D-glucosamine = di-trans,octa-cis-undecaprenyl diphospho-[N-acetyl-alpha-D-glucosaminyl-(1-&gt;4)]-N-acetyl-alpha-D-muramoyl-L-alanyl-D-glutamyl-meso-2,6-diaminopimeloyl-D-alanyl-D-alanine + UDP + H(+). It functions in the pathway cell wall biogenesis; peptidoglycan biosynthesis. Cell wall formation. Catalyzes the transfer of a GlcNAc subunit on undecaprenyl-pyrophosphoryl-MurNAc-pentapeptide (lipid intermediate I) to form undecaprenyl-pyrophosphoryl-MurNAc-(pentapeptide)GlcNAc (lipid intermediate II). The chain is UDP-N-acetylglucosamine--N-acetylmuramyl-(pentapeptide) pyrophosphoryl-undecaprenol N-acetylglucosamine transferase from Salmonella gallinarum (strain 287/91 / NCTC 13346).